We begin with the raw amino-acid sequence, 221 residues long: Cyclin-U3-1 (221 aa).

This sequence belongs to the cyclin family. Cyclin U/P subfamily. In terms of assembly, interacts with CDKA-1 and CDKB1-1. Expressed in roots, stems and flowers. Expressed in the shoot apex, leaf primordia and young leaves.

The protein is Cyclin-U3-1 (CYCU3-1) of Arabidopsis thaliana (Mouse-ear cress).